Reading from the N-terminus, the 24-residue chain is Skin secreted peptide 1 (24 aa).

Expressed by the skin glands.

The protein resides in the secreted. The sequence is that of Skin secreted peptide 1 from Ascaphus truei (Coastal tailed frog).